The primary structure comprises 319 residues: Acetyl-coenzyme A carboxylase carboxyl transferase subunit alpha (319 aa).

Positions 35 to 296 (NLDEEVQRLR…KAQLLADLLD (262 aa)) constitute a CoA carboxyltransferase C-terminal domain.

The protein belongs to the AccA family. In terms of assembly, acetyl-CoA carboxylase is a heterohexamer composed of biotin carboxyl carrier protein (AccB), biotin carboxylase (AccC) and two subunits each of ACCase subunit alpha (AccA) and ACCase subunit beta (AccD).

It localises to the cytoplasm. The enzyme catalyses N(6)-carboxybiotinyl-L-lysyl-[protein] + acetyl-CoA = N(6)-biotinyl-L-lysyl-[protein] + malonyl-CoA. Its pathway is lipid metabolism; malonyl-CoA biosynthesis; malonyl-CoA from acetyl-CoA: step 1/1. In terms of biological role, component of the acetyl coenzyme A carboxylase (ACC) complex. First, biotin carboxylase catalyzes the carboxylation of biotin on its carrier protein (BCCP) and then the CO(2) group is transferred by the carboxyltransferase to acetyl-CoA to form malonyl-CoA. This is Acetyl-coenzyme A carboxylase carboxyl transferase subunit alpha from Pectobacterium atrosepticum (strain SCRI 1043 / ATCC BAA-672) (Erwinia carotovora subsp. atroseptica).